The primary structure comprises 275 residues: Bis(5'-nucleosyl)-tetraphosphatase, symmetrical (275 aa).

The protein belongs to the Ap4A hydrolase family.

It catalyses the reaction P(1),P(4)-bis(5'-adenosyl) tetraphosphate + H2O = 2 ADP + 2 H(+). Its function is as follows. Hydrolyzes diadenosine 5',5'''-P1,P4-tetraphosphate to yield ADP. The chain is Bis(5'-nucleosyl)-tetraphosphatase, symmetrical from Nitrosospira multiformis (strain ATCC 25196 / NCIMB 11849 / C 71).